We begin with the raw amino-acid sequence, 93 residues long: Acylphosphatase (93 aa).

The Acylphosphatase-like domain maps to 6–93 (RAHILVSGEV…GDLGPFSVRH (88 aa)). Active-site residues include R21 and N39.

The protein belongs to the acylphosphatase family.

The catalysed reaction is an acyl phosphate + H2O = a carboxylate + phosphate + H(+). The sequence is that of Acylphosphatase (acyP) from Anaeromyxobacter sp. (strain Fw109-5).